The following is a 194-amino-acid chain: RxLR effector protein Avh240 (194 aa).

Positions Met1 to Ala23 are cleaved as a signal peptide. Positions Arg38 to Arg57 match the RxLR-dEER motif. The segment at Leu58–Ser108 is host plasma membrane-binding.

Belongs to the RxLR effector family. In terms of assembly, homodimer. Interacts with host soybean aspartic protease AP1.

The protein localises to the secreted. The protein resides in the host cell membrane. Effector that suppresses plant defense responses during the early stages of pathogen infection. Suppresses cell death induced by effectors and PAMPs in plant hosts. Avh240 dimerizes and localizes at the plasma membrane to interfere with aspartic protease AP1 secretion, which presents an effective mechanism by which effector proteins suppress plant apoplastic immunity. This is RxLR effector protein Avh240 from Phytophthora sojae (Soybean stem and root rot agent).